The chain runs to 219 residues: Intraflagellar transport protein 22 (219 aa).

GTP contacts are provided by residues glycine 12 to serine 19 and tryptophan 72 to lysine 79.

The protein belongs to the small GTPase superfamily. Rab family.

It localises to the cytoplasm. The protein resides in the cytoskeleton. Its subcellular location is the flagellum basal body. The protein localises to the cell projection. It is found in the cilium. It localises to the flagellum. Its function is as follows. Required for flagellum formation. The protein is Intraflagellar transport protein 22 (IFT22) of Trypanosoma brucei brucei (strain 927/4 GUTat10.1).